We begin with the raw amino-acid sequence, 433 residues long: Probable M18 family aminopeptidase 2 (433 aa).

3 residues coordinate Zn(2+): His-84, His-161, and His-409.

Belongs to the peptidase M18 family. Requires Zn(2+) as cofactor.

This Clostridium novyi (strain NT) protein is Probable M18 family aminopeptidase 2.